A 146-amino-acid chain; its full sequence is Peptidyl-lysine N-acetyltransferase YiaC (146 aa).

Residues 1–143 (MIREAQRSEL…PTWIMSWPVV (143 aa)) enclose the N-acetyltransferase domain.

It belongs to the acetyltransferase family.

It catalyses the reaction L-lysyl-[protein] + acetyl-CoA = N(6)-acetyl-L-lysyl-[protein] + CoA + H(+). Its function is as follows. N-epsilon-lysine acetyltransferase that catalyzes acetylation of a large number of proteins. Overexpression inhibits motility. The chain is Peptidyl-lysine N-acetyltransferase YiaC (yiaC) from Escherichia coli (strain K12).